The primary structure comprises 371 residues: Alanine racemase (371 aa).

The active-site Proton acceptor; specific for D-alanine is Lys-39. The residue at position 39 (Lys-39) is an N6-(pyridoxal phosphate)lysine. Residue Arg-137 coordinates substrate. Tyr-266 functions as the Proton acceptor; specific for L-alanine in the catalytic mechanism. Substrate is bound at residue Met-314.

The protein belongs to the alanine racemase family. It depends on pyridoxal 5'-phosphate as a cofactor.

The catalysed reaction is L-alanine = D-alanine. Its pathway is amino-acid biosynthesis; D-alanine biosynthesis; D-alanine from L-alanine: step 1/1. Its function is as follows. Catalyzes the interconversion of L-alanine and D-alanine. May also act on other amino acids. This Desulfovibrio desulfuricans (strain ATCC 27774 / DSM 6949 / MB) protein is Alanine racemase (alr).